The following is a 194-amino-acid chain: Small ribosomal subunit protein uS5 (194 aa).

One can recognise an S5 DRBM domain in the interval 26–89 (LEEKVVEIRR…ADAKKRIIKV (64 aa)).

Belongs to the universal ribosomal protein uS5 family. Part of the 30S ribosomal subunit. Contacts proteins S4 and S8.

In terms of biological role, with S4 and S12 plays an important role in translational accuracy. Located at the back of the 30S subunit body where it stabilizes the conformation of the head with respect to the body. The protein is Small ribosomal subunit protein uS5 of Sulfurihydrogenibium sp. (strain YO3AOP1).